The primary structure comprises 277 residues: ATP-dependent Clp protease proteolytic subunit, mitochondrial (277 aa).

Residues 1–56 constitute a mitochondrion transit peptide; it reads MWPGILVGGARVASCRYPALGPRLAAHFPAQRPPQRTLQNGLALQRCLHATATRAL. The active-site Nucleophile is the Ser153. His178 is an active-site residue. Residue Lys200 is modified to N6-succinyllysine. Lys211 bears the N6-acetyllysine mark. The interval 246 to 277 is disordered; it reads VHPPQDGEDEPTLVQKEPVEAAPAAEPVPAST. Residues 265–277 are compositionally biased toward low complexity; sequence EAAPAAEPVPAST.

The protein belongs to the peptidase S14 family. Fourteen CLPP subunits assemble into 2 heptameric rings which stack back to back to give a disk-like structure with a central cavity. Component of the ClpXP complex formed by the assembly of two CLPP heptameric rings with two CLPX hexameric rings, giving rise to a symmetrical structure with two central CLPP rings flanked by a CLPX ring at either end of the complex. In terms of tissue distribution, detected in liver (at protein level). Predominantly expressed in skeletal muscle. Intermediate levels in heart, liver and pancreas. Low in brain, placenta, lung and kidney.

Its subcellular location is the mitochondrion matrix. It catalyses the reaction Hydrolysis of proteins to small peptides in the presence of ATP and magnesium. alpha-casein is the usual test substrate. In the absence of ATP, only oligopeptides shorter than five residues are hydrolyzed (such as succinyl-Leu-Tyr-|-NHMec, and Leu-Tyr-Leu-|-Tyr-Trp, in which cleavage of the -Tyr-|-Leu- and -Tyr-|-Trp bonds also occurs).. Functionally, protease component of the ClpXP complex that cleaves peptides and various proteins in an ATP-dependent process. Has low peptidase activity in the absence of CLPX. The ClpXP complex can degrade CSN1S1, CSN2 and CSN3, as well as synthetic peptides (in vitro) and may be responsible for a fairly general and central housekeeping function rather than for the degradation of specific substrates. Cleaves PINK1 in the mitochondrion. This Homo sapiens (Human) protein is ATP-dependent Clp protease proteolytic subunit, mitochondrial.